The primary structure comprises 323 residues: Serine acetyltransferase 2 (323 aa).

The interval 302–323 (AQSNGPSLSAGDTEKGHTNSTS) is disordered. The segment covering 313–323 (DTEKGHTNSTS) has biased composition (basic and acidic residues).

The protein belongs to the transferase hexapeptide repeat family. Homomultimer. Ubiquitously expressed at low levels. Localized in vascular tissues, particularly in phloem.

It localises to the cytoplasm. It carries out the reaction L-serine + acetyl-CoA = O-acetyl-L-serine + CoA. The protein operates within amino-acid biosynthesis; L-cysteine biosynthesis; L-cysteine from L-serine: step 1/2. The protein is Serine acetyltransferase 2 of Arabidopsis thaliana (Mouse-ear cress).